A 397-amino-acid chain; its full sequence is Multidrug resistance protein MdtH (397 aa).

10 helical membrane passes run 11–31, 71–91, 94–114, 137–157, 163–183, 211–231, 242–262, 291–311, 338–358, and 366–386; these read WFLA…MPMI, FGAR…FASL, AQSG…GCLF, LLMM…SWLL, YVCL…LLIL, LVLI…IFPI, AVGW…YPLA, FATT…GIVI, LGLA…HDYA, and LPWL…VNCF.

It belongs to the major facilitator superfamily. DHA1 family. MdtH (TC 2.A.1.2.21) subfamily.

Its subcellular location is the cell inner membrane. This is Multidrug resistance protein MdtH from Aeromonas salmonicida (strain A449).